The sequence spans 953 residues: Translation initiation factor IF-2 (953 aa).

Disordered regions lie at residues 48–248 (SSFS…AELA) and 279–363 (TKLK…TERK). Composition is skewed to basic and acidic residues over residues 80–89 (TGSEHAEKTQ), 98–111 (FKAE…EQAA), and 140–188 (QGDK…ENHK). Polar residues predominate over residues 191–207 (RFTNQKKQGRQEPQSKS). The segment covering 229–248 (RQSETRFRAQQEAKRLAELA) has biased composition (basic and acidic residues). A compositionally biased stretch (polar residues) spans 282–291 (KSSNISAKST). Residues 300-317 (ARPEKNRELTHHSQEGQK) are compositionally biased toward basic and acidic residues. Residues 322 to 338 (SWNSQNQVRNQKNSNWN) show a composition bias toward low complexity. A compositionally biased stretch (basic residues) spans 339 to 348 (KNKKTKKGKN). The tr-type G domain maps to 454 to 623 (ERAPVVTIMG…LLVAEVEELK (170 aa)). The segment at 463-470 (GHVDHGKT) is G1. 463 to 470 (GHVDHGKT) contacts GTP. The interval 488–492 (GITQH) is G2. The segment at 509–512 (DTPG) is G3. Residues 509-513 (DTPGH) and 563-566 (NKID) contribute to the GTP site. Positions 563 to 566 (NKID) are G4. Residues 599 to 601 (SAK) form a G5 region.

This sequence belongs to the TRAFAC class translation factor GTPase superfamily. Classic translation factor GTPase family. IF-2 subfamily.

The protein localises to the cytoplasm. Its function is as follows. One of the essential components for the initiation of protein synthesis. Protects formylmethionyl-tRNA from spontaneous hydrolysis and promotes its binding to the 30S ribosomal subunits. Also involved in the hydrolysis of GTP during the formation of the 70S ribosomal complex. This is Translation initiation factor IF-2 from Streptococcus pyogenes serotype M18 (strain MGAS8232).